A 372-amino-acid polypeptide reads, in one-letter code: 4-hydroxy-3-methylbut-2-en-1-yl diphosphate synthase (flavodoxin) (372 aa).

[4Fe-4S] cluster-binding residues include Cys270, Cys273, Cys305, and Glu312.

Belongs to the IspG family. Requires [4Fe-4S] cluster as cofactor.

The catalysed reaction is (2E)-4-hydroxy-3-methylbut-2-enyl diphosphate + oxidized [flavodoxin] + H2O + 2 H(+) = 2-C-methyl-D-erythritol 2,4-cyclic diphosphate + reduced [flavodoxin]. It participates in isoprenoid biosynthesis; isopentenyl diphosphate biosynthesis via DXP pathway; isopentenyl diphosphate from 1-deoxy-D-xylulose 5-phosphate: step 5/6. Converts 2C-methyl-D-erythritol 2,4-cyclodiphosphate (ME-2,4cPP) into 1-hydroxy-2-methyl-2-(E)-butenyl 4-diphosphate. The chain is 4-hydroxy-3-methylbut-2-en-1-yl diphosphate synthase (flavodoxin) from Vibrio parahaemolyticus serotype O3:K6 (strain RIMD 2210633).